The chain runs to 209 residues: Kynurenine formamidase (209 aa).

Tryptophan 19 contributes to the substrate binding site. Histidine 49, histidine 53, and aspartate 55 together coordinate Zn(2+). Histidine 59 (proton donor/acceptor) is an active-site residue. Positions 160 and 172 each coordinate Zn(2+).

It belongs to the Cyclase 1 superfamily. KynB family. In terms of assembly, homodimer. Requires Zn(2+) as cofactor.

It catalyses the reaction N-formyl-L-kynurenine + H2O = L-kynurenine + formate + H(+). It participates in amino-acid degradation; L-tryptophan degradation via kynurenine pathway; L-kynurenine from L-tryptophan: step 2/2. Catalyzes the hydrolysis of N-formyl-L-kynurenine to L-kynurenine, the second step in the kynurenine pathway of tryptophan degradation. The sequence is that of Kynurenine formamidase from Ralstonia nicotianae (strain ATCC BAA-1114 / GMI1000) (Ralstonia solanacearum).